A 265-amino-acid polypeptide reads, in one-letter code: Putative hydro-lyase PA2116 (265 aa).

The protein belongs to the D-glutamate cyclase family.

This chain is Putative hydro-lyase PA2116, found in Pseudomonas aeruginosa (strain ATCC 15692 / DSM 22644 / CIP 104116 / JCM 14847 / LMG 12228 / 1C / PRS 101 / PAO1).